We begin with the raw amino-acid sequence, 348 residues long: Rhodopsin (348 aa).

At methionine 1 the chain carries N-acetylmethionine. At 1–36 (MNGTEGPNFYVPYSNKSGVVRSPYEEPQYYLAEPWM) the chain is on the extracellular side. N-linked (GlcNAc...) asparagine glycans are attached at residues asparagine 2 and asparagine 15. A helical membrane pass occupies residues 37–61 (FSCLAAYMFMLIVLGFPINFLTLYV). At 62-73 (TIQHKKLRTPLN) the chain is on the cytoplasmic side. Residues 74–96 (YILLNLAVADLFMVICGFTTTLV) traverse the membrane as a helical segment. At 97–110 (TSLNGYFVFGTTGC) the chain is on the extracellular side. A disulfide bond links cysteine 110 and cysteine 187. Residues 111 to 133 (LVEGFFATTGGEVALWALVVLAI) traverse the membrane as a helical segment. The 'Ionic lock' involved in activated form stabilization signature appears at 134 to 136 (ERY). The Cytoplasmic portion of the chain corresponds to 134–152 (ERYIVVCKPMSNFRFGENH). A helical membrane pass occupies residues 153–173 (AIMGVAFTWIMALACSVPPIF). The Extracellular segment spans residues 174 to 202 (GWSRYIPEGMQCSCGIDYYTLNPEFNNES). Glutamate 201 is a Zn(2+) binding site. A helical membrane pass occupies residues 203-224 (FVIYMFVVHFIIPLTVIFFCYG). The Cytoplasmic portion of the chain corresponds to 225 to 252 (QLVFTVKEAAAQQQESATTQKAEKEVTR). A helical transmembrane segment spans residues 253-274 (MVIIMVIAFLICWVPYASVAFY). Residues 275–286 (IFTHQGSDFGPI) lie on the Extracellular side of the membrane. Glutamine 279 contacts Zn(2+). Residues 287–308 (FMTLPAFFAKSSSIYNPVIYIM) traverse the membrane as a helical segment. Lysine 296 bears the N6-(retinylidene)lysine mark. Residues 309-348 (MNKQFRNCMITTLCCGKNPLGDDEASTTASKTETSQVAPA) lie on the Cytoplasmic side of the membrane. S-palmitoyl cysteine attachment occurs at residues cysteine 322 and cysteine 323. The tract at residues 330–348 (DDEASTTASKTETSQVAPA) is interaction with SAG. Serine 334 carries the phosphoserine modification. Phosphothreonine is present on residues threonine 335 and threonine 336. The residue at position 338 (serine 338) is a Phosphoserine. Phosphothreonine is present on residues threonine 340 and threonine 342. Serine 343 carries the phosphoserine modification.

It belongs to the G-protein coupled receptor 1 family. Opsin subfamily. Homodimer. May form a complex composed of RHO, GRK1 and RCVRN in a Ca(2+)-dependent manner; RCVRN prevents the interaction between GRK1 and RHO. Interacts with GRK1. Interacts (phosphorylated form) with SAG. Interacts with GNAT1. Interacts with GNAT3. SAG and G-proteins compete for a common binding site. Interacts with PRCD; the interaction promotes PRCD stability. Forms a complex with ASAP1 and ARF4. Forms a complex with ASAP1, RAB11A, Rabin8/RAB3IP, ARF4 and RAB11FIP3; the complex regulates Golgi-to-cilia rhodopsin/RHO transport in photoreceptors. Phosphorylated on some or all of the serine and threonine residues present in the C-terminal region. In terms of processing, contains one covalently linked retinal chromophore. Upon light absorption, the covalently bound 11-cis-retinal is converted to all-trans-retinal. After hydrolysis of the Schiff base and release of the covalently bound all-trans-retinal, active rhodopsin is regenerated by binding of a fresh molecule of 11-cis-retinal.

The protein localises to the membrane. It is found in the cell projection. The protein resides in the cilium. Its subcellular location is the photoreceptor outer segment. In terms of biological role, photoreceptor required for image-forming vision at low light intensity. Required for photoreceptor cell viability after birth. Light-induced isomerization of 11-cis to all-trans retinal triggers a conformational change that activates signaling via G-proteins. Subsequent receptor phosphorylation mediates displacement of the bound G-protein alpha subunit by the arrestin SAG and terminates signaling. This chain is Rhodopsin (RHO), found in Sminthopsis crassicaudata (Fat-tailed dunnart).